The following is a 515-amino-acid chain: Putative myristoylated protein 118L (515 aa).

Gly2 is lipidated: N-myristoyl glycine; by host. The next 3 membrane-spanning stretches (helical) occupy residues 188–208 (LSLA…VGGV), 214–234 (IIFP…FQWT), and 482–502 (WLLY…AFSS).

This sequence belongs to the IIV-6 118L/458R family.

It is found in the membrane. The sequence is that of Putative myristoylated protein 118L from Acheta domesticus (House cricket).